The primary structure comprises 486 residues: Alpha-L-arabinofuranosidase B (486 aa).

A signal peptide spans 1–25; that stretch reads MLSLKAVLRFASVAVAVVLPTLAQA. A glycan (N-linked (GlcNAc...) asparagine) is linked at asparagine 42. The tract at residues 45-342 is catalytic; that stretch reads LVKQRADPQI…KLYWRSDGTP (298 aa). Aspartate 51 serves as the catalytic Proton acceptor. Glutamate 229 acts as the Proton donor in catalysis. 3 N-linked (GlcNAc...) asparagine glycosylation sites follow: asparagine 302, asparagine 416, and asparagine 426. Residues 359–467 are ABD; it reads SSADQTLYVG…AGSYLVSGGN (109 aa).

The protein belongs to the glycosyl hydrolase 43 family.

The protein resides in the secreted. It carries out the reaction Hydrolysis of terminal non-reducing alpha-L-arabinofuranoside residues in alpha-L-arabinosides.. It participates in glycan metabolism; L-arabinan degradation. Functionally, secreted arabinofuranosidase that causes degradation of rice cell wall components during infection. Required for virulence. The chain is Alpha-L-arabinofuranosidase B from Pyricularia oryzae (strain 70-15 / ATCC MYA-4617 / FGSC 8958) (Rice blast fungus).